A 176-amino-acid chain; its full sequence is Oleosin Ara h 14.0101 (176 aa).

An N-acetylalanine; alternate modification is found at alanine 2. 2 helical membrane-spanning segments follow: residues 50-80 (IIAV…GLAI) and 95-117 (AVVT…LTGL). Residues 157-176 (TKDAGQQIQTKAQDVKRSSS) form a disordered region.

Belongs to the oleosin family. As to quaternary structure, homodimer. Forms oligomers. As to expression, expressed in seeds (at protein level). Not expressed in leaves.

The protein resides in the lipid droplet. Its subcellular location is the membrane. Its function is as follows. May have a structural role to stabilize the lipid body during desiccation of the seed by preventing coalescence of the oil. Probably interacts with both lipid and phospholipid moieties of lipid bodies. May also provide recognition signals for specific lipase anchorage in lipolysis during seedling growth. The protein is Oleosin Ara h 14.0101 of Arachis hypogaea (Peanut).